A 602-amino-acid polypeptide reads, in one-letter code: Cytokine-like nuclear factor N-PAC (602 aa).

Phosphoserine is present on residues Ser8 and Ser10. The region spanning 22–81 (PKDLIWAKMKGFTPWPGMIVDPPLDLLSQQRRANTKCVFFFGSRNFAWIEENNIKPFEGP) is the PWWP domain. Residues 162 to 262 (GSPDEGDGLD…ASSTPTGRRR (101 aa)) form a disordered region. 3 stretches are compositionally biased toward polar residues: residues 176 to 188 (ADSSASPVTSPAV), 204 to 217 (AATSVKSTKGSAKS), and 224 to 233 (SAQQSPSGPS). 3 positions are modified to phosphoserine: Ser224, Ser228, and Ser243. The interval 309–602 (RDIVPSEQTF…SSAVFVRSRF (294 aa)) is dehydrogenase domain. Residues 319–333 (GFLGLGMMGSTIVKD), Thr411, and Arg554 contribute to the NAD(+) site.

This sequence belongs to the HIBADH-related family. NP60 subfamily. In terms of assembly, binds to mononucleosomes. Interacts with male-specific lethal (MSL) histone acetyltransferase complex at least composed of mof, msl-1, msl-2 and msl-3.

The protein resides in the chromosome. Functionally, nucleosome-destabilizing factor that is recruited to genes during transcriptional activation and colocalizes with a subset of trimethylated 'Lys-36' histone H3 (H3K36me3)-enriched regions. Binds DNA (in vitro). Facilitates Pol II transcription through nucleosomes. Facilitates male-specific lethal (MSL) histone acetyltransferase complex targeting to active genes on the X chromosome. Stimulates the acetylation of 'Lys-56' of nucleosomal histone H3 (H3K56ac) by nej. May have oxidoreductase activity. The chain is Cytokine-like nuclear factor N-PAC from Drosophila melanogaster (Fruit fly).